The following is a 231-amino-acid chain: Heptaprenylglyceryl phosphate synthase (231 aa).

Lys12 is a sn-glycerol 1-phosphate binding site. Positions 14 and 40 each coordinate Mg(2+). Sn-glycerol 1-phosphate is bound by residues 159–164 (YMEYSG), Gly189, and 209–210 (GN).

This sequence belongs to the GGGP/HepGP synthase family. Group I subfamily. In terms of assembly, homodimer. Mg(2+) is required as a cofactor.

It carries out the reaction sn-glycerol 1-phosphate + all-trans-heptaprenyl diphosphate = 3-heptaprenyl-sn-glycero-1-phosphate + diphosphate. It participates in membrane lipid metabolism; glycerophospholipid metabolism. Prenyltransferase that catalyzes in vivo the transfer of the heptaprenyl moiety of heptaprenyl pyrophosphate (HepPP; 35 carbon atoms) to the C3 hydroxyl of sn-glycerol-1-phosphate (G1P), producing heptaprenylglyceryl phosphate (HepGP). This reaction is an ether-bond-formation step in the biosynthesis of archaea-type G1P-based membrane lipids found in Bacillales. The protein is Heptaprenylglyceryl phosphate synthase of Anoxybacillus flavithermus (strain DSM 21510 / WK1).